Reading from the N-terminus, the 115-residue chain is Potassium-transporting ATPase potassium-binding subunit (115 aa).

Transmembrane regions (helical) follow at residues 8–28 (YFLLLIVIAVPLGKYLYVAFF) and 60–80 (SYCTALLIVNAALLGISYGLL).

This sequence belongs to the KdpA family. The system is composed of three essential subunits: KdpA, KdpB and KdpC.

It is found in the cell membrane. In terms of biological role, part of the high-affinity ATP-driven potassium transport (or Kdp) system, which catalyzes the hydrolysis of ATP coupled with the electrogenic transport of potassium into the cytoplasm. This subunit binds the extracellular potassium ions and delivers the ions to the membrane domain of KdpB through an intramembrane tunnel. This is Potassium-transporting ATPase potassium-binding subunit from Geobacillus stearothermophilus (Bacillus stearothermophilus).